Consider the following 500-residue polypeptide: ATP synthase subunit alpha (500 aa).

Residue 169 to 176 participates in ATP binding; it reads GDRQTGKT.

Belongs to the ATPase alpha/beta chains family. F-type ATPases have 2 components, CF(1) - the catalytic core - and CF(0) - the membrane proton channel. CF(1) has five subunits: alpha(3), beta(3), gamma(1), delta(1), epsilon(1). CF(0) has three main subunits: a(1), b(2) and c(9-12). The alpha and beta chains form an alternating ring which encloses part of the gamma chain. CF(1) is attached to CF(0) by a central stalk formed by the gamma and epsilon chains, while a peripheral stalk is formed by the delta and b chains.

The protein localises to the cell membrane. The catalysed reaction is ATP + H2O + 4 H(+)(in) = ADP + phosphate + 5 H(+)(out). Its function is as follows. Produces ATP from ADP in the presence of a proton gradient across the membrane. The alpha chain is a regulatory subunit. The protein is ATP synthase subunit alpha of Lactococcus lactis subsp. cremoris (strain SK11).